Consider the following 547-residue polypeptide: CAP-Gly domain-containing linker protein 3 (547 aa).

The segment at 1-49 (MTKTDPAPMAPPPRGEEEEEEEEDEPVPEAPSPTQERRQKPVVHPSAPA) is disordered. The segment covering 16–27 (EEEEEEEEDEPV) has biased composition (acidic residues). 3 ANK repeats span residues 117–158 (TDMT…LRSR), 160–191 (TNMNALHYAAYFDVPDLVRVLLKGARPRVVNS), and 197–229 (NHGSALHIAASNLCLGAAKCLLEHGANPALRNR). Residues 314 to 356 (GTTEFASGQWVGVELDEPEGKNDGSVGGVRYFICPPKQGLFAS) enclose the CAP-Gly 1 domain. The interval 365–413 (DAPPSSVTSTPRTPRMDFSRVTGKGRREHKGKKKSPSSPSLGSLQQREG) is disordered. Over residues 367–377 (PPSSVTSTPRT) the composition is skewed to low complexity. The residue at position 374 (Thr374) is a Phosphothreonine. Residues 387–399 (GKGRREHKGKKKS) show a composition bias toward basic residues. A phosphoserine mark is found at Ser399 and Ser401. A CAP-Gly 2 domain is found at 436–478 (GKTDFAPGYWYGIELDQPTGKHDGSVFGVRYFTCAPRHGVFAP). Residues 488–547 (STDPPGDSVGAKKVHQVTMTQPKRTFTTVRTPKDIASENSISRLLFCCWFPWMLRAEMQS) are goLD. 2 S-palmitoyl cysteine lipidation sites follow: Cys534 and Cys535.

Homodimer. Interacts with AKT1 and AKT2; when AKT1 and AKT2 are phosphorylated and activated, affinity is higher for AKT2. Interacts with ZDHHC13 (via ANK repeats). Interacts with ZDHHC17 (via ANK repeats). Palmitoylation by ZDHHC17 regulates association with the plasma membrane.

The protein resides in the cell membrane. It is found in the cytoplasm. The protein localises to the golgi apparatus. Its subcellular location is the golgi stack. Functions as a cytoplasmic linker protein. Involved in TGN-endosome dynamics. May modulate the cellular compartmentalization of AKT kinase family and promote its cell membrane localization, thereby playing a role in glucose transport in adipocytes. The sequence is that of CAP-Gly domain-containing linker protein 3 (Clip3) from Mus musculus (Mouse).